The chain runs to 398 residues: Elongation factor Tu (398 aa).

The tr-type G domain occupies 10-207; that stretch reads KPHVNIGTIG…TVDEYIPEPE (198 aa). The interval 19–26 is G1; it reads GHVDHGKT. 19–26 is a GTP binding site; that stretch reads GHVDHGKT. Threonine 26 contributes to the Mg(2+) binding site. The segment at 63-67 is G2; that stretch reads GITIN. A G3 region spans residues 84 to 87; the sequence is DAPG. GTP is bound by residues 84 to 88 and 139 to 142; these read DAPGH and NKVD. The G4 stretch occupies residues 139–142; that stretch reads NKVD. Residues 177–179 are G5; sequence SAL.

The protein belongs to the TRAFAC class translation factor GTPase superfamily. Classic translation factor GTPase family. EF-Tu/EF-1A subfamily. As to quaternary structure, monomer.

It localises to the cytoplasm. The catalysed reaction is GTP + H2O = GDP + phosphate + H(+). Its function is as follows. GTP hydrolase that promotes the GTP-dependent binding of aminoacyl-tRNA to the A-site of ribosomes during protein biosynthesis. The chain is Elongation factor Tu from Streptococcus pneumoniae serotype 4 (strain ATCC BAA-334 / TIGR4).